A 903-amino-acid polypeptide reads, in one-letter code: Probable dipeptidyl-aminopeptidase B (903 aa).

A disordered region spans residues 1-83; that stretch reads MGKFEDDGNS…PLISSGTKTG (83 aa). The Cytoplasmic segment spans residues 1–90; it reads MGKFEDDGNS…KTGSSSRLRK (90 aa). A compositionally biased stretch (polar residues) spans 10 to 37; the sequence is SESVPLTRQRSESLASQTSTDSGLSIAS. Residues 91-111 traverse the membrane as a helical; Signal-anchor for type II membrane protein segment; the sequence is IVWLLVLLCVGGWVLSFVLFL. The Vacuolar portion of the chain corresponds to 112-903; that stretch reads TQKRPDTAAL…TANPKPQEST (792 aa). The interval 121-143 is disordered; that stretch reads LSSASTVEIHEPGPATGGTSHGK. 3 N-linked (GlcNAc...) asparagine glycosylation sites follow: N268, N349, and N640. S754 serves as the catalytic Charge relay system. N-linked (GlcNAc...) asparagine glycosylation occurs at N808. Residues D831 and H864 each act as charge relay system in the active site.

The protein belongs to the peptidase S9B family.

The protein localises to the vacuole membrane. The enzyme catalyses Release of an N-terminal dipeptide, Xaa-Yaa-|-Zaa-, from a polypeptide, preferentially when Yaa is Pro, provided Zaa is neither Pro nor hydroxyproline.. Its function is as follows. Type IV dipeptidyl-peptidase which removes N-terminal dipeptides sequentially from polypeptides having unsubstituted N-termini provided that the penultimate residue is proline. This is Probable dipeptidyl-aminopeptidase B (dapB) from Penicillium rubens (strain ATCC 28089 / DSM 1075 / NRRL 1951 / Wisconsin 54-1255) (Penicillium chrysogenum).